The following is a 729-amino-acid chain: Fatty acid oxidation complex subunit alpha (729 aa).

The segment at 1-189 (MLYKGDTLYL…KIGLVDGVVK (189 aa)) is enoyl-CoA hydratase/isomerase. Residue D296 participates in substrate binding. The segment at 311–729 (ETPKQAAVLG…ARPVGDLKTA (419 aa)) is 3-hydroxyacyl-CoA dehydrogenase. NAD(+)-binding positions include M324, D343, 400-402 (VVE), K407, and S429. H450 functions as the For 3-hydroxyacyl-CoA dehydrogenase activity in the catalytic mechanism. N453 serves as a coordination point for NAD(+). 2 residues coordinate substrate: N500 and Y660. The tract at residues 708–729 (RHNEPYYPPVEPARPVGDLKTA) is disordered.

In the N-terminal section; belongs to the enoyl-CoA hydratase/isomerase family. The protein in the C-terminal section; belongs to the 3-hydroxyacyl-CoA dehydrogenase family. Heterotetramer of two alpha chains (FadB) and two beta chains (FadA).

It catalyses the reaction a (3S)-3-hydroxyacyl-CoA + NAD(+) = a 3-oxoacyl-CoA + NADH + H(+). The catalysed reaction is a (3S)-3-hydroxyacyl-CoA = a (2E)-enoyl-CoA + H2O. The enzyme catalyses a 4-saturated-(3S)-3-hydroxyacyl-CoA = a (3E)-enoyl-CoA + H2O. It carries out the reaction (3S)-3-hydroxybutanoyl-CoA = (3R)-3-hydroxybutanoyl-CoA. It catalyses the reaction a (3Z)-enoyl-CoA = a 4-saturated (2E)-enoyl-CoA. The catalysed reaction is a (3E)-enoyl-CoA = a 4-saturated (2E)-enoyl-CoA. The protein operates within lipid metabolism; fatty acid beta-oxidation. Functionally, involved in the aerobic and anaerobic degradation of long-chain fatty acids via beta-oxidation cycle. Catalyzes the formation of 3-oxoacyl-CoA from enoyl-CoA via L-3-hydroxyacyl-CoA. It can also use D-3-hydroxyacyl-CoA and cis-3-enoyl-CoA as substrate. This Escherichia coli (strain SMS-3-5 / SECEC) protein is Fatty acid oxidation complex subunit alpha.